Here is an 81-residue protein sequence, read N- to C-terminus: Sulfur carrier protein TusA (81 aa).

The Cysteine persulfide intermediate role is filled by C19.

This sequence belongs to the sulfur carrier protein TusA family.

Its subcellular location is the cytoplasm. In terms of biological role, sulfur carrier protein which probably makes part of a sulfur-relay system. The protein is Sulfur carrier protein TusA of Shewanella baltica (strain OS223).